A 485-amino-acid chain; its full sequence is Cysteine--tRNA ligase (485 aa).

Cys-29 serves as a coordination point for Zn(2+). A 'HIGH' region motif is present at residues 31–41; that stretch reads ATVQGMPHVGH. The disordered stretch occupies residues 174-198; sequence QRVEDMQDAPDADPRGKRDPHDFAL. A compositionally biased stretch (basic and acidic residues) spans 185–197; sequence ADPRGKRDPHDFA. Zn(2+) contacts are provided by Cys-227, His-252, and Glu-256. The 'KMSKS' region motif lies at 283 to 287; the sequence is KMSKS. Lys-286 provides a ligand contact to ATP.

It belongs to the class-I aminoacyl-tRNA synthetase family. Monomer. Zn(2+) is required as a cofactor.

The protein localises to the cytoplasm. The enzyme catalyses tRNA(Cys) + L-cysteine + ATP = L-cysteinyl-tRNA(Cys) + AMP + diphosphate. In Micrococcus luteus (strain ATCC 4698 / DSM 20030 / JCM 1464 / CCM 169 / CCUG 5858 / IAM 1056 / NBRC 3333 / NCIMB 9278 / NCTC 2665 / VKM Ac-2230) (Micrococcus lysodeikticus), this protein is Cysteine--tRNA ligase.